The chain runs to 225 residues: Sugar fermentation stimulation protein homolog (225 aa).

This sequence belongs to the SfsA family.

This Sulfurisphaera tokodaii (strain DSM 16993 / JCM 10545 / NBRC 100140 / 7) (Sulfolobus tokodaii) protein is Sugar fermentation stimulation protein homolog.